Consider the following 291-residue polypeptide: Ribosomal RNA small subunit methyltransferase A (291 aa).

Residues His-21, Leu-23, Gly-48, Glu-70, Asp-95, and Asn-115 each coordinate S-adenosyl-L-methionine.

Belongs to the class I-like SAM-binding methyltransferase superfamily. rRNA adenine N(6)-methyltransferase family. RsmA subfamily.

The protein localises to the cytoplasm. It catalyses the reaction adenosine(1518)/adenosine(1519) in 16S rRNA + 4 S-adenosyl-L-methionine = N(6)-dimethyladenosine(1518)/N(6)-dimethyladenosine(1519) in 16S rRNA + 4 S-adenosyl-L-homocysteine + 4 H(+). In terms of biological role, specifically dimethylates two adjacent adenosines (A1518 and A1519) in the loop of a conserved hairpin near the 3'-end of 16S rRNA in the 30S particle. May play a critical role in biogenesis of 30S subunits. The protein is Ribosomal RNA small subunit methyltransferase A of Prochlorococcus marinus (strain NATL1A).